A 452-amino-acid polypeptide reads, in one-letter code: FAD transporter (452 aa).

12 consecutive transmembrane segments (helical) span residues 21–41, 49–69, 96–116, 131–151, 167–187, 199–219, 248–270, 283–303, 324–344, 357–377, 392–412, and 417–437; these read LPNL…TFFI, LAAI…AIGV, ALLL…IFIE, LIHD…LLMV, MIMT…IFGI, AIAT…LLII, AALM…AHID, LESV…PFIA, FILV…QPLA, LSFY…VIIF, VINL…GSYI, and GLLL…YYLA.

Belongs to the multi antimicrobial extrusion (MATE) (TC 2.A.66.1) family.

It localises to the cell inner membrane. In terms of biological role, flavin adenine dinucleotide (FAD) transporter that facilitates export of flavin electron shuttles. In Shewanella oneidensis (strain ATCC 700550 / JCM 31522 / CIP 106686 / LMG 19005 / NCIMB 14063 / MR-1), this protein is FAD transporter.